Consider the following 632-residue polypeptide: ATP-dependent zinc metalloprotease FtsH (632 aa).

At 1 to 9 (MKPTNEPKK) the chain is on the cytoplasmic side. The helical transmembrane segment at 10 to 30 (PFFQSPIILAVLGGILLIFFL) threads the bilayer. The Periplasmic segment spans residues 31–116 (RSFNSDGSFS…INYSGFSESN (86 aa)). Residues 117–137 (FFTDMLGWLMPILVILGLWMF) traverse the membrane as a helical segment. Over 138 to 632 (MANRMQKNMG…RLIPLEEQAS (495 aa)) the chain is Cytoplasmic. ATP is bound by residues Ala173, 213-217 (GTGKT), and His354. His434 provides a ligand contact to Zn(2+). Glu435 is an active-site residue. Zn(2+)-binding residues include His438 and Asp511.

The protein in the central section; belongs to the AAA ATPase family. This sequence in the C-terminal section; belongs to the peptidase M41 family. In terms of assembly, homohexamer. It depends on Zn(2+) as a cofactor.

The protein localises to the cell inner membrane. Acts as a processive, ATP-dependent zinc metallopeptidase for both cytoplasmic and membrane proteins. Plays a role in the quality control of integral membrane proteins. This chain is ATP-dependent zinc metalloprotease FtsH, found in Helicobacter pylori (strain ATCC 700392 / 26695) (Campylobacter pylori).